Reading from the N-terminus, the 323-residue chain is Phosphopantothenate--cysteine ligase 2 (323 aa).

Belongs to the PPC synthetase family. Homodimer.

It catalyses the reaction (R)-4'-phosphopantothenate + L-cysteine + CTP = N-[(R)-4-phosphopantothenoyl]-L-cysteine + CMP + diphosphate + H(+). It participates in cofactor biosynthesis; coenzyme A biosynthesis; CoA from (R)-pantothenate: step 2/5. In terms of biological role, catalyzes the first step in the biosynthesis of coenzyme A from vitamin B5, where cysteine is conjugated to 4'-phosphopantothenate to form 4-phosphopantothenoylcysteine. The protein is Phosphopantothenate--cysteine ligase 2 of Oryza sativa subsp. japonica (Rice).